Reading from the N-terminus, the 302-residue chain is Nucleotide-binding protein Bcep18194_A6125 (302 aa).

8-15 (GISGSGKS) contacts ATP. 57–60 (DARS) lines the GTP pocket.

The protein belongs to the RapZ-like family.

Functionally, displays ATPase and GTPase activities. The polypeptide is Nucleotide-binding protein Bcep18194_A6125 (Burkholderia lata (strain ATCC 17760 / DSM 23089 / LMG 22485 / NCIMB 9086 / R18194 / 383)).